The primary structure comprises 400 residues: Enoyl-[acyl-carrier-protein] reductase [NADH] 2 (400 aa).

Residues 48–53 (GASSGF), 75–76 (FE), 112–113 (DA), and 141–142 (LA) contribute to the NAD(+) site. Tyrosine 228 lines the substrate pocket. The Proton donor role is filled by tyrosine 238. NAD(+) contacts are provided by residues lysine 247 and 276 to 278 (LVT).

The protein belongs to the TER reductase family. As to quaternary structure, monomer.

The enzyme catalyses a 2,3-saturated acyl-[ACP] + NAD(+) = a (2E)-enoyl-[ACP] + NADH + H(+). It participates in lipid metabolism; fatty acid biosynthesis. Involved in the final reduction of the elongation cycle of fatty acid synthesis (FAS II). Catalyzes the reduction of a carbon-carbon double bond in an enoyl moiety that is covalently linked to an acyl carrier protein (ACP). The protein is Enoyl-[acyl-carrier-protein] reductase [NADH] 2 of Vibrio vulnificus (strain CMCP6).